A 95-amino-acid polypeptide reads, in one-letter code: Aspartyl/glutamyl-tRNA(Asn/Gln) amidotransferase subunit C (95 aa).

The protein belongs to the GatC family. As to quaternary structure, heterotrimer of A, B and C subunits.

The catalysed reaction is L-glutamyl-tRNA(Gln) + L-glutamine + ATP + H2O = L-glutaminyl-tRNA(Gln) + L-glutamate + ADP + phosphate + H(+). The enzyme catalyses L-aspartyl-tRNA(Asn) + L-glutamine + ATP + H2O = L-asparaginyl-tRNA(Asn) + L-glutamate + ADP + phosphate + 2 H(+). Allows the formation of correctly charged Asn-tRNA(Asn) or Gln-tRNA(Gln) through the transamidation of misacylated Asp-tRNA(Asn) or Glu-tRNA(Gln) in organisms which lack either or both of asparaginyl-tRNA or glutaminyl-tRNA synthetases. The reaction takes place in the presence of glutamine and ATP through an activated phospho-Asp-tRNA(Asn) or phospho-Glu-tRNA(Gln). This Xanthobacter autotrophicus (strain ATCC BAA-1158 / Py2) protein is Aspartyl/glutamyl-tRNA(Asn/Gln) amidotransferase subunit C.